Consider the following 1518-residue polypeptide: Putative cellulose synthase 2 (1518 aa).

The interval 1–731 (MYGTWFTTGK…EEKLEKQSFV (731 aa)) is catalytic. The next 3 helical transmembrane spans lie at 24–44 (PVWVPVVLGVVLMAFVGSVRI), 71–91 (ITVFLMMLSLLVSLRYIVWRL), and 105–125 (LAVLLLLAEAYALMTLCLSYF). The segment at 144–237 (QWPSVDVFVP…FAVIFDCDHV (94 aa)) is catalytic subdomain A. The active site involves aspartate 186. Substrate-binding residues include aspartate 233 and aspartate 235. Residues 314–374 (EAVMGIGGFA…GQRVRWARGM (61 aa)) form a catalytic subdomain B region. The active site involves aspartate 330. 5 consecutive transmembrane segments (helical) span residues 404 to 424 (FLFAIPRLTFLVSPLAFLFLG), 427 to 447 (IIAASPLAISVYALPHIFHSV), 465 to 485 (IYETSLALFLVRITIVTLLQP), 514 to 534 (ILAGVLCAALLRGVFGIVWQF), and 543 to 563 (FILNTLWVVISLIIVLASIAV). The 100-residue stretch at 569 to 668 (QTRNAPRVSV…ERQVVSMVFG (100 aa)) folds into the PilZ domain. The interval 732–1518 (LKPVPRSARH…IARDDLTGEL (787 aa)) is cyclic di-GMP binding domain. The segment at 765 to 785 (APSPDQSGVTAETPFGDSNTG) is disordered. The span at 768–785 (PDQSGVTAETPFGDSNTG) shows a compositional bias: polar residues. Residues 1481–1501 (ALYLAGLAGAGLAALGVWAWL) traverse the membrane as a helical segment.

In the N-terminal section; belongs to the glycosyltransferase 2 family. The protein in the C-terminal section; belongs to the AcsB/BcsB family.

It localises to the cell inner membrane. It catalyses the reaction [(1-&gt;4)-beta-D-glucosyl](n) + UDP-alpha-D-glucose = [(1-&gt;4)-beta-D-glucosyl](n+1) + UDP + H(+). The protein operates within glycan metabolism; bacterial cellulose biosynthesis. This is Putative cellulose synthase 2 (bcsABII-A) from Komagataeibacter xylinus (Gluconacetobacter xylinus).